The sequence spans 279 residues: Acetyl-coenzyme A carboxylase carboxyl transferase subunit beta (279 aa).

A CoA carboxyltransferase N-terminal domain is found at 23–279; the sequence is LWWKCEECGA…LTTLLSLMKL (257 aa). Zn(2+) is bound by residues Cys27, Cys30, Cys46, and Cys49. The C4-type zinc finger occupies 27–49; it reads CEECGAALHKKQMEASDHTCPQC.

It belongs to the AccD/PCCB family. As to quaternary structure, acetyl-CoA carboxylase is a heterohexamer composed of biotin carboxyl carrier protein (AccB), biotin carboxylase (AccC) and two subunits each of ACCase subunit alpha (AccA) and ACCase subunit beta (AccD). It depends on Zn(2+) as a cofactor.

It localises to the cytoplasm. It catalyses the reaction N(6)-carboxybiotinyl-L-lysyl-[protein] + acetyl-CoA = N(6)-biotinyl-L-lysyl-[protein] + malonyl-CoA. The protein operates within lipid metabolism; malonyl-CoA biosynthesis; malonyl-CoA from acetyl-CoA: step 1/1. Functionally, component of the acetyl coenzyme A carboxylase (ACC) complex. Biotin carboxylase (BC) catalyzes the carboxylation of biotin on its carrier protein (BCCP) and then the CO(2) group is transferred by the transcarboxylase to acetyl-CoA to form malonyl-CoA. In Chlorobium chlorochromatii (strain CaD3), this protein is Acetyl-coenzyme A carboxylase carboxyl transferase subunit beta.